The following is a 364-amino-acid chain: Glycine oxidase (364 aa).

Residues 12–13 (VI), 32–33 (ER), 40–41 (AS), 45–47 (GGI), and Val173 contribute to the FAD site. Residue Arg302 participates in substrate binding. An FAD-binding site is contributed by 327 to 333 (HYRNGLV).

It belongs to the DAO family. ThiO subfamily. As to quaternary structure, monomer. The cofactor is FAD.

It catalyses the reaction glycine + O2 + H2O = glyoxylate + H2O2 + NH4(+). The enzyme catalyses sarcosine + O2 + H2O = methylamine + glyoxylate + H2O2. The protein operates within cofactor biosynthesis; thiamine diphosphate biosynthesis. In terms of biological role, catalyzes the oxidation of glycine, leading to glyoxyl imine and hydrogen peroxide as primary products; glyoxyl imine is used for the biosynthesis of the thiazole ring of thiamine. Otherwise, glyoxyl imine is spontaneously hydrolyzed in water to produce glyoxylate and ammonia. Can also use sarcosine (N-methylglycine) as substrate. The polypeptide is Glycine oxidase (Pseudomonas aeruginosa (strain ATCC 15692 / DSM 22644 / CIP 104116 / JCM 14847 / LMG 12228 / 1C / PRS 101 / PAO1)).